The following is a 308-amino-acid chain: D-alanine--D-alanine ligase (308 aa).

The 201-residue stretch at 102–302 folds into the ATP-grasp domain; sequence KKVAAAAGVA…FGELLSWMVE (201 aa). 128 to 183 lines the ATP pocket; it reads PMEPPYVVKPVREGSSFGVVIVKEDQTHPPQIISSAEWNYGAEVLVEKYIPGRELT. Residues Asp-252, Glu-269, and Asn-271 each coordinate Mg(2+).

Belongs to the D-alanine--D-alanine ligase family. The cofactor is Mg(2+). Mn(2+) is required as a cofactor.

Its subcellular location is the cytoplasm. The catalysed reaction is 2 D-alanine + ATP = D-alanyl-D-alanine + ADP + phosphate + H(+). It participates in cell wall biogenesis; peptidoglycan biosynthesis. In terms of biological role, cell wall formation. The polypeptide is D-alanine--D-alanine ligase (Brucella anthropi (strain ATCC 49188 / DSM 6882 / CCUG 24695 / JCM 21032 / LMG 3331 / NBRC 15819 / NCTC 12168 / Alc 37) (Ochrobactrum anthropi)).